The primary structure comprises 164 residues: uncharacterized protein (164 aa).

The span at 1-17 (MNSRVPATQSWFSSHLP) shows a compositional bias: polar residues. The disordered stretch occupies residues 1–48 (MNSRVPATQSWFSSHLPTTEPDLEPATAAEGSTTETATLSPETTSFND). Low complexity predominate over residues 24–45 (EPATAAEGSTTETATLSPETTS). Residues 64 to 84 (MLLSFGIITVIGLAVAMVLYI) form a helical membrane-spanning segment. The stretch at 106–130 (TEEQDELEQELLEHGRDAASMQAAA) forms a coiled coil.

It localises to the membrane. This is an uncharacterized protein from Mus musculus (Mouse).